Reading from the N-terminus, the 886-residue chain is Vam6/Vps39-like protein (886 aa).

One can recognise a CNH domain in the interval 15 to 294; that stretch reads PLQIDCLAAW…RFITSGGSNI (280 aa). The stretch at 573–750 is one CHCR repeat; the sequence is FTEDLPEVES…LLRMYLSPPS (178 aa).

This sequence belongs to the VAM6/VPS39 family. Homooligomer. Interacts with TGFBR2 and, less efficiently, with TGFBR1; interaction with TGFBR2 is independent of the receptor kinase activity and of the presence of TGF-beta. Also interacts with ACVR2B, but not with BMPR2. Interacts with SMAD4, preferentially following TGF-beta treatment. Does not interact with SAMD2 or SMAD3. Component of the homotypic fusion and vacuole protein sorting (HOPS) complex; the core of which composed of the class C Vps proteins VPS11, VPS16, VPS18 and VPS33A, is associated with VPS39 and VPS41. Interacts with PLEKHM2; involved in VPS39 recruitment to ARL8B-containing lysosomes. Associates with adapter protein complex 3 (AP-3) and clathrin:AP-3 complexes. Interacts with STX17; this interaction is increased in the absence of TMEM39A. Interacts with RAB7, RAB2A and RAB2B. Interacts with RAB2A (GTP-bound); the interaction contributes to obtaining a functional HOPS complex that promotes autophagosome-lysosome membrane fusion driven by STX17-SNAP29-VAMP8. Interacts with RAB39A (GTP-bound) and RAB39B (GTP-bound); interaction with RAB39A contributes to obtaining a functional HOPS complex. As to quaternary structure, (Microbial infection) Interacts with SARS coronavirus-2/SARS-CoV-2 ORF3A protein; the interaction is direct and sequestrates VPS39, thereby preventing HOPS complex from interacting with the autophagosomal SNARE protein STX17. ORF3A enhances the interaction of VPS39 with VPS11 and VPS18, while its interaction with the VPS16:VPS33A module is attenuated. Widely expressed, with highest levels in heart, skeletal muscle, kidney, pancreas, brain, placenta and spleen.

It localises to the cytoplasm. It is found in the lysosome membrane. Its subcellular location is the late endosome membrane. Its function is as follows. Regulator of TGF-beta/activin signaling, inhibiting SMAD3- and activating SMAD2-dependent transcription. Acts by interfering with SMAD3/SMAD4 complex formation, this would lead to inhibition of SMAD3-dependent transcription and relieve SMAD3 inhibition of SMAD2-dependent promoters, thus increasing SMAD2-dependent transcription. Does not affect TGF-beta-induced SMAD2 or SMAD3 phosphorylation, nor SMAD2/SMAD4 complex formation. Plays a role in vesicle-mediated protein trafficking to lysosomal compartments including the endocytic membrane transport and autophagic pathways. Acts as a component of the HOPS endosomal tethering complex. This complex is proposed to be involved in the Rab5-to-Rab7 endosome conversion probably implicating MON1A/B, and via binding SNAREs and SNARE complexes to mediate tethering and docking events during SNARE-mediated membrane fusion. The HOPS complex is proposed to be recruited to Rab7 on the late endosomal membrane and to regulate late endocytic, phagocytic and autophagic traffic towards lysosomes. Involved in homotypic vesicle fusions between late endosomes and in heterotypic fusions between late endosomes and lysosomes. Required for fusion of endosomes and autophagosomes with lysosomes. In Homo sapiens (Human), this protein is Vam6/Vps39-like protein.